The sequence spans 147 residues: uncharacterized protein (147 aa).

Residues 69-89 (IFFFLSLYLSSIKIPMLILNI) form a helical membrane-spanning segment.

It is found in the membrane. This is an uncharacterized protein from Saccharomyces cerevisiae (strain ATCC 204508 / S288c) (Baker's yeast).